Consider the following 375-residue polypeptide: MFRILTINPGSTSTKLSIFEDERMVKMQNFSHSPDELGRFQKILDQLEFREKIARQFVEETGYSLSSFSAFVSRGGLLDPIPGGVYLVDGLMIKTLKSGKNGEHASNLGAIIAHRFSSETGVPAYVVDPVVVDEMEDVARVSGHPNYQRKSIFHALNQKTVAKEVARMMNKRYEEMNLVVAHMGGGISIAAHRKGRVIDVNNALDGDGPFTPERSGTLPLTQLVDLCFSGKFTYEEMKKRIVGNGGLVAYLGTSDAREVVRRIKQGDEWAKRVYRAMAYQIAKWIGKMAAVLKGEVDFIVLTGGLAHEKEFLVPWITKRVSFIAPVLVFPGSNEEKALALSALRVLRGEEKPKNYSEESRRWRERYDSYLDGILR.

Belongs to the acetokinase family.

The protein localises to the cytoplasm. It catalyses the reaction butanoate + ATP = butanoyl phosphate + ADP. In Thermotoga maritima (strain ATCC 43589 / DSM 3109 / JCM 10099 / NBRC 100826 / MSB8), this protein is Probable butyrate kinase 2.